A 550-amino-acid polypeptide reads, in one-letter code: Solute carrier family 22 member 6 (550 aa).

Residues 1 to 9 are Cytoplasmic-facing; sequence MAFNDLLQQ. The chain crosses the membrane as a helical span at residues 10–30; the sequence is VGGVGRFQQIQVTLVVLPLLL. The Extracellular portion of the chain corresponds to 31-135; sequence MASHNTVQNF…LVCSHRALRQ (105 aa). N-linked (GlcNAc...) asparagine glycosylation is found at asparagine 56, asparagine 92, and asparagine 113. Residues 136–156 traverse the membrane as a helical segment; it reads LAQSLYMVGVLLGAMVFGYLA. The Cytoplasmic portion of the chain corresponds to 157–164; sequence DRLGRRKV. A helical transmembrane segment spans residues 165–187; the sequence is LILNYLQTAVSGTCAAFAPNFPI. Over 188 to 190 the chain is Extracellular; it reads YCA. The chain crosses the membrane as a helical span at residues 191–213; that stretch reads FRLLSGMSLAGIALNCMTLNVEW. At 214–224 the chain is on the cytoplasmic side; that stretch reads MPIHTRACVGT. A helical membrane pass occupies residues 225-245; sequence LIGYVYSLGQFLLAGVAYAVP. Topologically, residues 246–248 are extracellular; that stretch reads HWR. Residues 249-269 traverse the membrane as a helical segment; that stretch reads HLQLLISVPFFAFFIYSWFFI. The Cytoplasmic segment spans residues 270-337; that stretch reads ESARWHSSSG…ELLRCPTLRH (68 aa). A helical membrane pass occupies residues 338 to 358; it reads LFLCLSMLWFATSFAYYGLVM. The Extracellular segment spans residues 359–368; sequence DLQGFGVSIY. Residues 369–389 traverse the membrane as a helical segment; sequence LIQVIFGAVDLPAKLVGFLVI. Topologically, residues 390-395 are cytoplasmic; that stretch reads NSLGRR. The chain crosses the membrane as a helical span at residues 396 to 416; it reads PAQMAALLLAGICILLNGVVP. Residues 417-425 are Extracellular-facing; the sequence is QDQSVIRTS. The chain crosses the membrane as a helical span at residues 426 to 446; that stretch reads LAVLGKGCLAASFNCIFLYTG. Topologically, residues 447-456 are cytoplasmic; it reads ELYPTMIRQT. The chain crosses the membrane as a helical span at residues 457-477; sequence GLGMGSTMARVGSIVSPLVSM. At 478-484 the chain is on the extracellular side; the sequence is TTELYPS. The helical transmembrane segment at 485–505 threads the bilayer; the sequence is VPLFIYGAVPVAASAVTVLLP. Residues 506-550 lie on the Cytoplasmic side of the membrane; it reads ETLGQPLPDTVQDLESRKGKQTPQQQEHQKYMVPLQASAQEKNGL. Residues 513 to 550 are disordered; it reads PDTVQDLESRKGKQTPQQQEHQKYMVPLQASAQEKNGL.

This sequence belongs to the major facilitator (TC 2.A.1) superfamily. Organic cation transporter (TC 2.A.1.19) family. Glycosylated. Glycosylation is necessary for proper targeting of the transporter to the plasma membrane. In terms of tissue distribution, expressed in kidney; in the basolateral membrane of the proximal tubule.

It localises to the basolateral cell membrane. The protein resides in the basal cell membrane. The enzyme catalyses (6R)-L-erythro-5,6,7,8-tetrahydrobiopterin(out) + a dicarboxylate(in) = (6R)-L-erythro-5,6,7,8-tetrahydrobiopterin(in) + a dicarboxylate(out). It carries out the reaction L-erythro-7,8-dihydrobiopterin(out) + a dicarboxylate(in) = L-erythro-7,8-dihydrobiopterin(in) + a dicarboxylate(out). It catalyses the reaction L-sepiapterin(out) + a dicarboxylate(in) = L-sepiapterin(in) + a dicarboxylate(out). The catalysed reaction is prostaglandin F2alpha(out) + a dicarboxylate(in) = prostaglandin F2alpha(in) + a dicarboxylate(out). The enzyme catalyses prostaglandin E2(out) + a dicarboxylate(in) = prostaglandin E2(in) + a dicarboxylate(out). It carries out the reaction 3',5'-cyclic AMP(out) + a dicarboxylate(in) = 3',5'-cyclic AMP(in) + a dicarboxylate(out). It catalyses the reaction 3',5'-cyclic GMP(out) + a dicarboxylate(in) = 3',5'-cyclic GMP(in) + a dicarboxylate(out). The catalysed reaction is urate(out) + a dicarboxylate(in) = urate(in) + a dicarboxylate(out). The enzyme catalyses kynurenate(out) + glutarate(in) = kynurenate(in) + glutarate(out). It carries out the reaction (indol-3-yl)acetate(out) + a dicarboxylate(in) = (indol-3-yl)acetate(in) + a dicarboxylate(out). It catalyses the reaction indoxyl sulfate(out) + a dicarboxylate(in) = indoxyl sulfate(in) + a dicarboxylate(out). The catalysed reaction is N-benzoylglycine(out) + a dicarboxylate(in) = N-benzoylglycine(in) + a dicarboxylate(out). The enzyme catalyses 3-carboxy-4-methyl-5-propyl-2-furanpropanoate(out) + a dicarboxylate(in) = 3-carboxy-4-methyl-5-propyl-2-furanpropanoate(in) + a dicarboxylate(out). In terms of biological role, secondary active transporter that functions as a Na(+)-independent organic anion (OA)/dicarboxylate antiporter where the uptake of one molecule of OA into the cell is coupled with an efflux of one molecule of intracellular dicarboxylate such as 2-oxoglutarate or glutarate. Mediates the uptake of OA across the basolateral side of proximal tubule epithelial cells, thereby contributing to the renal elimination of endogenous OA from the systemic circulation into the urine. Functions as a biopterin transporters involved in the uptake and the secretion of coenzymes tetrahydrobiopterin (BH4), dihydrobiopterin (BH2) and sepiapterin to urine, thereby determining baseline levels of blood biopterins. Transports prostaglandin E2 (PGE2) and prostaglandin F2-alpha (PGF2-alpha) and may contribute to their renal excretion. Also mediates the uptake of cyclic nucleotides such as cAMP and cGMP. Involved in the transport of neuroactive tryptophan metabolites kynurenate (KYNA) and xanthurenate (XA) and may contribute to their secretion from the brain. May transport glutamate. Also involved in the disposition of uremic toxins and potentially toxic xenobiotics by the renal organic anion secretory pathway, helping reduce their undesired toxicological effects on the body. Uremic toxins include the indoxyl sulfate (IS), hippurate/N-benzoylglycine (HA), indole acetate (IA), 3-carboxy-4- methyl-5-propyl-2-furanpropionate (CMPF) and urate. Xenobiotics include the mycotoxin ochratoxin (OTA). May also contribute to the transport of organic compounds in testes across the blood-testis-barrier. The polypeptide is Solute carrier family 22 member 6 (Macaca fascicularis (Crab-eating macaque)).